The following is a 490-amino-acid chain: Histone-lysine N-methyltransferase, H3 lysine-9 specific (490 aa).

Residues 8 to 69 form the Chromo domain; the sequence is YEVERIVDEK…RKRRLKGSNS (62 aa). Disordered regions lie at residues 61-133 and 150-190; these read KRRL…TALT and KKLG…KPRN. Residues 102 to 114 are compositionally biased toward basic and acidic residues; sequence FSRELNVKKENKK. Residues 115-133 show a composition bias toward polar residues; that stretch reads VFSSQTTKRQSRKQSTALT. K127 is modified (N6,N6,N6-trimethyllysine; alternate). K127 carries the post-translational modification N6-methyllysine; alternate. The span at 155–168 shows a compositional bias: basic and acidic residues; sequence TRNEVKEESQKREL. The segment covering 169–185 has biased composition (polar residues); that stretch reads VSNSIKEATSPKTSSIL. One can recognise a Pre-SET domain in the interval 258-325; sequence SGCNCSSLGG…ECPNRVVQRG (68 aa). The Zn(2+) site is built by C260, C262, C268, C276, C278, C307, C311, C313, and C317. The region spanning 328-452 is the SET domain; that stretch reads LPLEIFKTKE…PLEELTFDYA (125 aa). S-adenosyl-L-methionine-binding positions include 338-340, Y381, R406, and 407-410; these read KGW and FFNH. C412 contributes to the Zn(2+) binding site. The tract at residues 453–472 is autoregulatory loop; it reads GAKDFSPVQSQKSQQNRISK. K455 carries the post-translational modification N6,N6,N6-trimethyllysine; by autocatalysis; alternate. At K455 the chain carries N6,N6-dimethyllysine; by autocatalysis; alternate. At K455 the chain carries N6-methyllysine; by autocatalysis; alternate. At K464 the chain carries N6-methyllysine. The region spanning 473–489 is the Post-SET domain; sequence LRRQCKCGSANCRGWLF. Zn(2+)-binding residues include C477, C479, and C484. 477–478 contacts S-adenosyl-L-methionine; the sequence is CK.

This sequence belongs to the class V-like SAM-binding methyltransferase superfamily. Histone-lysine methyltransferase family. Suvar3-9 subfamily. Component of the Clr4 methyltransferase complex (ClrC) composed of at least clr4, rik1, pcu4, rbx1, raf1 and raf2. The cullin pcu4, rik1, raf1, raf2 and the ring-box protein rbx1 are components of an E3 ubiquitin ligase, whose activity is essential for heterochromatin assembly. Interacts directly with pcu4. Interacts with mlo3. In terms of processing, autocatalytic methylation of specific lysine residues in an internal loop (autoregulatory loop) promote a conformational switch that enhances the H3K9me activity of clr4.

The protein resides in the nucleus. The protein localises to the cytoplasm. Its subcellular location is the cytoskeleton. It localises to the microtubule organizing center. It is found in the spindle pole body. The protein resides in the chromosome. It catalyses the reaction L-lysyl(9)-[histone H3] + 3 S-adenosyl-L-methionine = N(6),N(6),N(6)-trimethyl-L-lysyl(9)-[histone H3] + 3 S-adenosyl-L-homocysteine + 3 H(+). The enzyme catalyses N(6)-methyl-L-lysyl(9)-[histone H3] + S-adenosyl-L-methionine = N(6),N(6)-dimethyl-L-lysyl(9)-[histone H3] + S-adenosyl-L-homocysteine + H(+). The catalysed reaction is N(6),N(6)-dimethyl-L-lysyl(9)-[histone H3] + S-adenosyl-L-methionine = N(6),N(6),N(6)-trimethyl-L-lysyl(9)-[histone H3] + S-adenosyl-L-homocysteine + H(+). It carries out the reaction L-lysyl-[protein] + S-adenosyl-L-methionine = N(6)-methyl-L-lysyl-[protein] + S-adenosyl-L-homocysteine + H(+). It catalyses the reaction N(6)-methyl-L-lysyl-[protein] + S-adenosyl-L-methionine = N(6),N(6)-dimethyl-L-lysyl-[protein] + S-adenosyl-L-homocysteine + H(+). The enzyme catalyses N(6),N(6)-dimethyl-L-lysyl-[protein] + S-adenosyl-L-methionine = N(6),N(6),N(6)-trimethyl-L-lysyl-[protein] + S-adenosyl-L-homocysteine + H(+). The catalysed reaction is L-lysyl(9)-[histone H3] + S-adenosyl-L-methionine = N(6)-methyl-L-lysyl(9)-[histone H3] + S-adenosyl-L-homocysteine + H(+). Its activity is regulated as follows. An internal loop (autoregulatory loop) inhibits the catalytic activity of the enzyme by blocking the histone H3K9 substrate-binding pocket. Autocatalytic methylation of specific lysine residues in this loop promote a conformational switch that enhances the H3K9me activity of clr4. Its function is as follows. Histone methyltransferase which contributes to the establishment of heterochromatin by specifically methylating histone H3 to form H3K9me. Part of the Clr4 methyltransferase complex (ClrC). ClrC preferentially ubiquitylates H3K14 and ClrC-mediated H3 ubiquitination promotes clr4 methyltransferase activity. Clr4 functions as a reader and writer of H3K9 methylation. It sets the H3K9me mark and afterwards this H3K9me mark is recognized by the chromodomains of clr4 and swi6/HP1, which then recruit additional clr4 leading to the methylation of neighboring nucleosomes. H3K9me represents a specific tag for epigenetic transcriptional repression by recruiting swi6/HP1 to methylated histones which leads to transcriptional silencing within centromeric heterochromatin, telomeres, ribosomal DNA repeats, and the silent mating-type region. Clr4 methyltransferase activity promotes the assembly of a tripartite complex composed of ClrC and complexes involved in siRNA generation. Apart from H3K9, also methylates non-histone proteins such as mlo3. Interacts with mlo3 to promote the processing of centromeric and antisense RNAs. The polypeptide is Histone-lysine N-methyltransferase, H3 lysine-9 specific (clr4) (Schizosaccharomyces pombe (strain 972 / ATCC 24843) (Fission yeast)).